A 350-amino-acid chain; its full sequence is Uroporphyrinogen decarboxylase (350 aa).

Residues 28–32 (RQAGR), phenylalanine 47, aspartate 78, tyrosine 155, serine 210, and histidine 325 contribute to the substrate site.

This sequence belongs to the uroporphyrinogen decarboxylase family. In terms of assembly, homodimer.

It localises to the cytoplasm. The catalysed reaction is uroporphyrinogen III + 4 H(+) = coproporphyrinogen III + 4 CO2. It functions in the pathway porphyrin-containing compound metabolism; protoporphyrin-IX biosynthesis; coproporphyrinogen-III from 5-aminolevulinate: step 4/4. Functionally, catalyzes the decarboxylation of four acetate groups of uroporphyrinogen-III to yield coproporphyrinogen-III. The protein is Uroporphyrinogen decarboxylase of Synechocystis sp. (strain ATCC 27184 / PCC 6803 / Kazusa).